We begin with the raw amino-acid sequence, 101 residues long: Small integral membrane protein 14 (101 aa).

Basic and acidic residues predominate over residues 71-81 (SDRRTADDAAI). The tract at residues 71-101 (SDRRTADDAAIEKPTGSSDDNTPPPPPPSAM) is disordered. A compositionally biased stretch (pro residues) spans 92-101 (TPPPPPPSAM).

In Caenorhabditis elegans, this protein is Small integral membrane protein 14.